Reading from the N-terminus, the 364-residue chain is Flavonoid 3'-O-methyltransferase 3 (364 aa).

Residue aspartate 232 coordinates S-adenosyl-L-methionine. Catalysis depends on histidine 270, which acts as the Proton acceptor.

It belongs to the class I-like SAM-binding methyltransferase superfamily. Cation-independent O-methyltransferase family. In terms of assembly, homodimer.

It carries out the reaction quercetin + S-adenosyl-L-methionine = isorhamnetin + S-adenosyl-L-homocysteine + H(+). The enzyme catalyses luteolin + S-adenosyl-L-methionine = chrysoeriol + S-adenosyl-L-homocysteine + H(+). It catalyses the reaction a 3'-hydroxyflavone + S-adenosyl-L-methionine = a 3'-methoxyflavone + S-adenosyl-L-homocysteine + H(+). The catalysed reaction is rhamnetin + S-adenosyl-L-methionine = rhamnacene + S-adenosyl-L-homocysteine + H(+). It carries out the reaction 3',4',7,8-tetrahydroxyflavone + S-adenosyl-L-methionine = 4',7,8-trihydroxy-3'-methoxyflavone-7-olate + S-adenosyl-L-homocysteine + H(+). The enzyme catalyses taxifolin + S-adenosyl-L-methionine = taxifolin 3'-methyl ether + S-adenosyl-L-homocysteine + H(+). It participates in flavonoid metabolism. Flavonoid 3'-O-methyltransferase involved in the biosynthesis of polymethoxylated flavonoids natural products such as pebrellin, aroma compounds which contribute to the flavor of peppermint, and exhibit pharmacological activities such as anti-allergic, anti-oxidant, antibacterial, anti-proliferative, and anti-inflammatory effects. Catalyzes S-adenosylmethionine-dependent regioselective 3'-O-methylation of flavonoids; active on various hydroxylated flavonoid substrates, including quercetin, rhamnetin, luteolin (LUT), 7,8,3'4'-tetrahydroxy-flavone and taxifolin, and, with a lower efficiency, eupatorin and hesperetin. The protein is Flavonoid 3'-O-methyltransferase 3 of Mentha piperita (Peppermint).